The sequence spans 342 residues: Ketol-acid reductoisomerase (NADP(+)) (342 aa).

The 180-residue stretch at Val2–Thr181 folds into the KARI N-terminal Rossmann domain. NADP(+) is bound by residues Tyr25 to Gln28, Arg48, Ser52, and Asp82 to Gln85. His107 is an active-site residue. An NADP(+)-binding site is contributed by Gly133. The KARI C-terminal knotted domain occupies Thr182–Val327. Mg(2+)-binding residues include Asp190, Glu194, Glu226, and Glu230. Ser251 provides a ligand contact to substrate.

The protein belongs to the ketol-acid reductoisomerase family. The cofactor is Mg(2+).

It carries out the reaction (2R)-2,3-dihydroxy-3-methylbutanoate + NADP(+) = (2S)-2-acetolactate + NADPH + H(+). The enzyme catalyses (2R,3R)-2,3-dihydroxy-3-methylpentanoate + NADP(+) = (S)-2-ethyl-2-hydroxy-3-oxobutanoate + NADPH + H(+). The protein operates within amino-acid biosynthesis; L-isoleucine biosynthesis; L-isoleucine from 2-oxobutanoate: step 2/4. It participates in amino-acid biosynthesis; L-valine biosynthesis; L-valine from pyruvate: step 2/4. Functionally, involved in the biosynthesis of branched-chain amino acids (BCAA). Catalyzes an alkyl-migration followed by a ketol-acid reduction of (S)-2-acetolactate (S2AL) to yield (R)-2,3-dihydroxy-isovalerate. In the isomerase reaction, S2AL is rearranged via a Mg-dependent methyl migration to produce 3-hydroxy-3-methyl-2-ketobutyrate (HMKB). In the reductase reaction, this 2-ketoacid undergoes a metal-dependent reduction by NADPH to yield (R)-2,3-dihydroxy-isovalerate. The sequence is that of Ketol-acid reductoisomerase (NADP(+)) from Bacillus pumilus (strain SAFR-032).